Consider the following 386-residue polypeptide: Patatin-2-Kuras 3 (386 aa).

A signal peptide spans 1–23; sequence MATTKSVLVLFFMILATTSSTCA. The 198-residue stretch at 32-229 folds into the PNPLA domain; the sequence is LSIDGGGIKG…TVGDPALLSL (198 aa). The GXGXXG motif lies at 36–41; the sequence is GGGIKG. The short motif at 75-79 is the GXSXG element; the sequence is GTSTG. Ser-77 (nucleophile) is an active-site residue. Asn-115 is a glycosylation site (N-linked (GlcNAc...) asparagine). Catalysis depends on Asp-215, which acts as the Proton acceptor. The DGA/G signature appears at 215–217; the sequence is DGA. Positions 321-384 form a coiled coil; it reads ENALTGTTTE…DRKKLRANKA (64 aa).

The protein belongs to the patatin family. Tuber.

It localises to the vacuole. In terms of biological role, probable lipolytic acyl hydrolase (LAH), an activity which is thought to be involved in the response of tubers to pathogens. The protein is Patatin-2-Kuras 3 (pat2-k3) of Solanum tuberosum (Potato).